Reading from the N-terminus, the 119-residue chain is Hemerythrin subunit B (119 aa).

7 residues coordinate Fe cation: H26, H55, E59, H74, H78, H107, and D112.

This sequence belongs to the hemerythrin family.

Hemerythrin is a respiratory protein in blood cells of certain marine worms. The oxygen-binding site in each chain contains two iron atoms. The sequence is that of Hemerythrin subunit B from Sipunculus nudus (Sipunculan worm).